The following is a 367-amino-acid chain: Probable dual-specificity RNA methyltransferase RlmN (367 aa).

Glutamate 92 (proton acceptor) is an active-site residue. The 229-residue stretch at 98–326 folds into the Radical SAM core domain; the sequence is QEYGLSVCVT…YDTLKKNGIN (229 aa). The cysteines at positions 105 and 341 are disulfide-linked. [4Fe-4S] cluster is bound by residues cysteine 112, cysteine 116, and cysteine 119. S-adenosyl-L-methionine-binding positions include 164–165, serine 196, 219–221, and asparagine 297; these read GE and SLH. Cysteine 341 acts as the S-methylcysteine intermediate in catalysis.

The protein belongs to the radical SAM superfamily. RlmN family. It depends on [4Fe-4S] cluster as a cofactor.

Its subcellular location is the cytoplasm. It catalyses the reaction adenosine(2503) in 23S rRNA + 2 reduced [2Fe-2S]-[ferredoxin] + 2 S-adenosyl-L-methionine = 2-methyladenosine(2503) in 23S rRNA + 5'-deoxyadenosine + L-methionine + 2 oxidized [2Fe-2S]-[ferredoxin] + S-adenosyl-L-homocysteine. The catalysed reaction is adenosine(37) in tRNA + 2 reduced [2Fe-2S]-[ferredoxin] + 2 S-adenosyl-L-methionine = 2-methyladenosine(37) in tRNA + 5'-deoxyadenosine + L-methionine + 2 oxidized [2Fe-2S]-[ferredoxin] + S-adenosyl-L-homocysteine. In terms of biological role, specifically methylates position 2 of adenine 2503 in 23S rRNA and position 2 of adenine 37 in tRNAs. This Listeria welshimeri serovar 6b (strain ATCC 35897 / DSM 20650 / CCUG 15529 / CIP 8149 / NCTC 11857 / SLCC 5334 / V8) protein is Probable dual-specificity RNA methyltransferase RlmN.